The chain runs to 383 residues: Hydroxymethylglutaryl-CoA synthase (383 aa).

Residue Asp-29 coordinates (3S)-3-hydroxy-3-methylglutaryl-CoA. Glu-79 serves as the catalytic Proton donor/acceptor. (3S)-3-hydroxy-3-methylglutaryl-CoA contacts are provided by Cys-111, Thr-152, Ser-201, His-233, Lys-242, Asn-275, and Ser-308. Cys-111 acts as the Acyl-thioester intermediate in catalysis. His-233 acts as the Proton donor/acceptor in catalysis.

It belongs to the thiolase-like superfamily. HMG-CoA synthase family. As to quaternary structure, homodimer.

The catalysed reaction is acetoacetyl-CoA + acetyl-CoA + H2O = (3S)-3-hydroxy-3-methylglutaryl-CoA + CoA + H(+). Its pathway is metabolic intermediate biosynthesis; (R)-mevalonate biosynthesis; (R)-mevalonate from acetyl-CoA: step 2/3. Is sensitive to feedback substrate inhibition by acetoacetyl-CoA. Is inactivated by hymeglusin, which also blocks the growth of E.faecalis, indicating the critical role that the mevalonate pathway plays in isoprenoid biosynthesis. In terms of biological role, catalyzes the condensation of acetyl-CoA with acetoacetyl-CoA to form 3-hydroxy-3-methylglutaryl-CoA (HMG-CoA). Functions in the mevalonate (MVA) pathway leading to isopentenyl diphosphate (IPP), a key precursor for the biosynthesis of isoprenoid compounds. In Enterococcus faecalis (Streptococcus faecalis), this protein is Hydroxymethylglutaryl-CoA synthase (mvaS).